Consider the following 119-residue polypeptide: Large ribosomal subunit protein bL20 (119 aa).

Belongs to the bacterial ribosomal protein bL20 family.

In terms of biological role, binds directly to 23S ribosomal RNA and is necessary for the in vitro assembly process of the 50S ribosomal subunit. It is not involved in the protein synthesizing functions of that subunit. The sequence is that of Large ribosomal subunit protein bL20 from Acidovorax ebreus (strain TPSY) (Diaphorobacter sp. (strain TPSY)).